Reading from the N-terminus, the 565-residue chain is Proline--tRNA ligase (565 aa).

The protein belongs to the class-II aminoacyl-tRNA synthetase family. ProS type 1 subfamily. Homodimer.

Its subcellular location is the cytoplasm. It catalyses the reaction tRNA(Pro) + L-proline + ATP = L-prolyl-tRNA(Pro) + AMP + diphosphate. In terms of biological role, catalyzes the attachment of proline to tRNA(Pro) in a two-step reaction: proline is first activated by ATP to form Pro-AMP and then transferred to the acceptor end of tRNA(Pro). As ProRS can inadvertently accommodate and process non-cognate amino acids such as alanine and cysteine, to avoid such errors it has two additional distinct editing activities against alanine. One activity is designated as 'pretransfer' editing and involves the tRNA(Pro)-independent hydrolysis of activated Ala-AMP. The other activity is designated 'posttransfer' editing and involves deacylation of mischarged Ala-tRNA(Pro). The misacylated Cys-tRNA(Pro) is not edited by ProRS. In Francisella tularensis subsp. mediasiatica (strain FSC147), this protein is Proline--tRNA ligase.